Here is a 31-residue protein sequence, read N- to C-terminus: Cytochrome b6-f complex subunit 6 (31 aa).

Residues 3 to 23 (ALIGYILLMTLMFSLAAGLYF) form a helical membrane-spanning segment.

It belongs to the PetL family. In terms of assembly, the 4 large subunits of the cytochrome b6-f complex are cytochrome b6, subunit IV (17 kDa polypeptide, PetD), cytochrome f and the Rieske protein, while the 4 small subunits are PetG, PetL, PetM and PetN. The complex functions as a dimer.

Its subcellular location is the plastid. It is found in the chloroplast thylakoid membrane. Functionally, component of the cytochrome b6-f complex, which mediates electron transfer between photosystem II (PSII) and photosystem I (PSI), cyclic electron flow around PSI, and state transitions. PetL is important for photoautotrophic growth as well as for electron transfer efficiency and stability of the cytochrome b6-f complex. The sequence is that of Cytochrome b6-f complex subunit 6 from Emiliania huxleyi (Coccolithophore).